The primary structure comprises 200 residues: Small ribosomal subunit protein mS26 (200 aa).

The N-terminal 27 residues, 1 to 27 (MLRALNRLAARPETRPPTPLLLPVRGR), are a transit peptide targeting the mitochondrion. A disordered region spans residues 1 to 44 (MLRALNRLAARPETRPPTPLLLPVRGRKTRHDPPAKSKVGRVQT). K159 is subject to N6-acetyllysine.

It belongs to the mitochondrion-specific ribosomal protein mS26 family. As to quaternary structure, component of the mitochondrial ribosome small subunit (28S) which comprises a 12S rRNA and about 30 distinct proteins.

It localises to the mitochondrion. This Mus musculus (Mouse) protein is Small ribosomal subunit protein mS26 (Mrps26).